The sequence spans 118 residues: V-type proton ATPase subunit G 2 (118 aa).

Residues 8-57 (IQQLLQAEKRAAEKVADARKRKARRLKQAKEEAQMEVDQYRREREQEFQS) are a coiled coil. Residues 25 to 90 (ARKRKARRLK…VQGMQSSQQR (66 aa)) are disordered. The segment covering 35–55 (QAKEEAQMEVDQYRREREQEF) has biased composition (basic and acidic residues). 2 stretches are compositionally biased toward polar residues: residues 56–69 (QSKQ…QGNL) and 78–89 (RRQVQGMQSSQQ).

The protein belongs to the V-ATPase G subunit family. As to quaternary structure, V-ATPase is a heteromultimeric enzyme made up of two complexes: the ATP-hydrolytic V1 complex and the proton translocation V0 complex. The V1 complex consists of three catalytic AB heterodimers that form a heterohexamer, three peripheral stalks each consisting of EG heterodimers, one central rotor including subunits D and F, and the regulatory subunits C and H. The proton translocation complex V0 consists of the proton transport subunit a, a ring of proteolipid subunits c9c'', rotary subunit d, subunits e and f, and the accessory subunits ATP6AP1/Ac45 and ATP6AP2/PRR. Expressed in brain (at protein level).

It is found in the melanosome. Its subcellular location is the cytoplasmic vesicle. The protein resides in the clathrin-coated vesicle membrane. In terms of biological role, subunit of the V1 complex of vacuolar(H+)-ATPase (V-ATPase), a multisubunit enzyme composed of a peripheral complex (V1) that hydrolyzes ATP and a membrane integral complex (V0) that translocates protons. V-ATPase is responsible for acidifying and maintaining the pH of intracellular compartments and in some cell types, is targeted to the plasma membrane, where it is responsible for acidifying the extracellular environment. This Bos taurus (Bovine) protein is V-type proton ATPase subunit G 2.